A 185-amino-acid chain; its full sequence is Elongation factor P 1 (185 aa).

It belongs to the elongation factor P family.

It is found in the cytoplasm. It participates in protein biosynthesis; polypeptide chain elongation. Its function is as follows. Involved in peptide bond synthesis. Stimulates efficient translation and peptide-bond synthesis on native or reconstituted 70S ribosomes in vitro. Probably functions indirectly by altering the affinity of the ribosome for aminoacyl-tRNA, thus increasing their reactivity as acceptors for peptidyl transferase. The protein is Elongation factor P 1 (efp1) of Chlamydia muridarum (strain MoPn / Nigg).